A 100-amino-acid chain; its full sequence is High mobility group protein C (100 aa).

Positions 12-80 (PKRPLSAFFL…KYEKDMQAYE (69 aa)) form a DNA-binding region, HMG box. Residues 81–100 (KKYGKPEKQKKIKKNKKGSK) are disordered. Positions 90-100 (KKIKKNKKGSK) are enriched in basic residues.

Its subcellular location is the nucleus. The protein localises to the chromosome. The protein is High mobility group protein C of Tetrahymena thermophila.